The primary structure comprises 234 residues: Large ribosomal subunit protein uL1 (234 aa).

It belongs to the universal ribosomal protein uL1 family. Part of the 50S ribosomal subunit.

Functionally, binds directly to 23S rRNA. The L1 stalk is quite mobile in the ribosome, and is involved in E site tRNA release. Its function is as follows. Protein L1 is also a translational repressor protein, it controls the translation of the L11 operon by binding to its mRNA. The chain is Large ribosomal subunit protein uL1 from Syntrophobacter fumaroxidans (strain DSM 10017 / MPOB).